Consider the following 240-residue polypeptide: 2,3-bisphosphoglycerate-dependent phosphoglycerate mutase 2 (240 aa).

Substrate-binding positions include 8–15 (RHGQSEWN), 21–22 (TG), Arg60, 87–90 (ERHY), Lys98, 114–115 (RR), and 183–184 (GN). His9 (tele-phosphohistidine intermediate) is an active-site residue. Glu87 acts as the Proton donor/acceptor in catalysis.

This sequence belongs to the phosphoglycerate mutase family. BPG-dependent PGAM subfamily.

It carries out the reaction (2R)-2-phosphoglycerate = (2R)-3-phosphoglycerate. It functions in the pathway carbohydrate degradation; glycolysis; pyruvate from D-glyceraldehyde 3-phosphate: step 3/5. In terms of biological role, catalyzes the interconversion of 2-phosphoglycerate and 3-phosphoglycerate. In Bacillus cereus (strain ATCC 10987 / NRS 248), this protein is 2,3-bisphosphoglycerate-dependent phosphoglycerate mutase 2.